The primary structure comprises 23 residues: Conotoxin as25a (23 aa).

Position 4 is a 4-hydroxyproline; partial (proline 4). 4-hydroxyproline; partial; alternate is present on proline 23. At proline 23 the chain carries Proline amide; alternate.

Post-translationally, the name as25b given in PubMed:23474143 corresponds to the hydroxylated peptide. The amidation of the C-terminus of this hydroxylated peptide is not directly confirmed. Contains 3 disulfide bonds. Expressed by the venom duct.

The protein localises to the secreted. Its function is as follows. Upon intracranial injection in mice, as25a (the toxin without the two 4-hydroxyprolines) provokes paralysis of the hind limbs and death with a dose of 240 pmol. In Conus cancellatus (Cancellate cone), this protein is Conotoxin as25a.